We begin with the raw amino-acid sequence, 233 residues long: MKMKLVTAAVMGLAMSTAMAATDATSLATDKDKLSYSIGADLGKNFKNQGIDVNPEAMAKGMQDAMSGAQLALTEQQMKDVLNKFQKDLMAKRTAEFNKKADENKVKGEAFLTENKNKPGVVVLPSGLQYKVINAGNGVKPGKSDTVTVEYTGRLIDGTVFDSTEKTGKPATFQVSQVIPGWTEALQLMPAGSTWEIYVPSGLAYGPRSVGGPIGPNETLIFKIHLISVKKSS.

The signal sequence occupies residues 1–20 (MKMKLVTAAVMGLAMSTAMA). The 90-residue stretch at 144 to 233 (SDTVTVEYTG…IHLISVKKSS (90 aa)) folds into the PPIase FKBP-type domain.

Belongs to the FKBP-type PPIase family.

The protein localises to the cell outer membrane. It carries out the reaction [protein]-peptidylproline (omega=180) = [protein]-peptidylproline (omega=0). Functionally, essential virulence factor associated with macrophage infectivity. Exhibits PPIase activity. This Legionella pneumophila (strain Corby) protein is Outer membrane protein MIP (mip).